Reading from the N-terminus, the 65-residue chain is Large ribosomal subunit protein bL33c (65 aa).

Belongs to the bacterial ribosomal protein bL33 family.

It localises to the plastid. It is found in the chloroplast. The chain is Large ribosomal subunit protein bL33c from Pyropia yezoensis (Susabi-nori).